Reading from the N-terminus, the 208-residue chain is Ribosomal RNA large subunit methyltransferase E (208 aa).

5 residues coordinate S-adenosyl-L-methionine: Gly63, Trp65, Asp83, Asp99, and Asp124. Lys164 functions as the Proton acceptor in the catalytic mechanism.

It belongs to the class I-like SAM-binding methyltransferase superfamily. RNA methyltransferase RlmE family.

The protein localises to the cytoplasm. It carries out the reaction uridine(2552) in 23S rRNA + S-adenosyl-L-methionine = 2'-O-methyluridine(2552) in 23S rRNA + S-adenosyl-L-homocysteine + H(+). Specifically methylates the uridine in position 2552 of 23S rRNA at the 2'-O position of the ribose in the fully assembled 50S ribosomal subunit. The chain is Ribosomal RNA large subunit methyltransferase E from Hamiltonella defensa subsp. Acyrthosiphon pisum (strain 5AT).